A 580-amino-acid chain; its full sequence is Probable inositol transporter 3 (580 aa).

Helical transmembrane passes span Gly34–Ile54, Glu69–Tyr89, Val104–Leu124, Leu127–Met147, Gly161–Thr181, Trp187–Pro207, Phe289–Ala309, Ala316–Val336, Leu344–Asn364, Phe455–Gly475, Leu493–Phe513, and Gly524–Val544.

The protein belongs to the major facilitator superfamily. Sugar transporter (TC 2.A.1.1) family.

Its subcellular location is the membrane. Plasma membrane inositol-proton symporter. The chain is Probable inositol transporter 3 (INT3) from Arabidopsis thaliana (Mouse-ear cress).